The chain runs to 114 residues: Large ribosomal subunit protein bL20c (114 aa).

The protein belongs to the bacterial ribosomal protein bL20 family.

It localises to the plastid. The protein localises to the chloroplast. Its function is as follows. Binds directly to 23S ribosomal RNA and is necessary for the in vitro assembly process of the 50S ribosomal subunit. It is not involved in the protein synthesizing functions of that subunit. This chain is Large ribosomal subunit protein bL20c, found in Psilotum nudum (Whisk fern).